We begin with the raw amino-acid sequence, 422 residues long: Serine protease HTRA2, mitochondrial (422 aa).

The transit peptide at 1 to 17 directs the protein to the mitochondrion; the sequence is MALRGSHRLEVIFKRCI. The propeptide occupies 18–74; the sequence is ASPVLHSQAGNRRSSQLAIKGVDPNSNGNSGQYQQNGEHKEKGWRRLVRFFVPFSLG. Residues 28–55 form a disordered region; sequence NRRSSQLAIKGVDPNSNGNSGQYQQNGE. A compositionally biased stretch (low complexity) spans 42-53; the sequence is NSNGNSGQYQQN. The helical transmembrane segment at 64–82 threads the bilayer; sequence LVRFFVPFSLGAAVSAAII. 2 consecutive short sequence motifs (IAP-binding) follow at residues 75–78 and 94–97; these read AAVS and SKMT. A serine protease region spans residues 139–302; the sequence is SNGSGFIIEQ…IPIDYVKVFL (164 aa). Active-site charge relay system residues include His157, Asp189, and Ser266. Positions 325–410 constitute a PDZ domain; it reads MGITMLTLTP…TLDIVILRGV (86 aa).

Belongs to the peptidase S1C family. As to quaternary structure, interacts with th/DIAP1 (via BIR 2 domain).

It is found in the mitochondrion intermembrane space. Its subcellular location is the mitochondrion membrane. It carries out the reaction Cleavage of non-polar aliphatic amino-acids at the P1 position, with a preference for Val, Ile and Met. At the P2 and P3 positions, Arg is selected most strongly with a secondary preference for other hydrophilic residues.. Functionally, serine protease that shows proteolytic activity against a non-specific substrate beta-casein. Promotes or induces cell death either by direct binding to and inhibition of BIRC proteins (also called inhibitor of apoptosis proteins, IAPs), leading to an increase in caspase activity, or by a BIRC inhibition-independent, caspase-independent and serine protease activity-dependent mechanism. Can antagonize antiapoptotic activity of th/Diap1 by directly inducing the degradation of th/Diap1. In Drosophila sechellia (Fruit fly), this protein is Serine protease HTRA2, mitochondrial.